The chain runs to 301 residues: 2-dehydropantoate 2-reductase (301 aa).

NADP(+) contacts are provided by residues 7 to 12, Lys-74, Asn-99, and Ala-123; that span reads GAGAIG. Residue Lys-179 is the Proton donor of the active site. Residues Lys-179, Asn-183, Asn-187, Asn-197, and 246-249 each bind substrate; that span reads NYNS. Glu-261 is an NADP(+) binding site.

It belongs to the ketopantoate reductase family.

It is found in the cytoplasm. The enzyme catalyses (R)-pantoate + NAD(+) = 2-dehydropantoate + NADH + H(+). It carries out the reaction (R)-pantoate + NADP(+) = 2-dehydropantoate + NADPH + H(+). The protein operates within cofactor biosynthesis; coenzyme A biosynthesis. Catalyzes the NAD(P)H-dependent reduction of ketopantoate into pantoic acid. The chain is 2-dehydropantoate 2-reductase from Pyrococcus horikoshii (strain ATCC 700860 / DSM 12428 / JCM 9974 / NBRC 100139 / OT-3).